The following is a 271-amino-acid chain: Formamidopyrimidine-DNA glycosylase (271 aa).

The active-site Schiff-base intermediate with DNA is the P2. E3 (proton donor) is an active-site residue. K58 (proton donor; for beta-elimination activity) is an active-site residue. Positions 91, 110, and 152 each coordinate DNA. The FPG-type zinc-finger motif lies at 237–271 (RAYGRGGQPCTVCQTELKEIKLGQRTSVFCPSCQR). The active-site Proton donor; for delta-elimination activity is R261.

This sequence belongs to the FPG family. As to quaternary structure, monomer. Zn(2+) serves as cofactor.

It carries out the reaction Hydrolysis of DNA containing ring-opened 7-methylguanine residues, releasing 2,6-diamino-4-hydroxy-5-(N-methyl)formamidopyrimidine.. The enzyme catalyses 2'-deoxyribonucleotide-(2'-deoxyribose 5'-phosphate)-2'-deoxyribonucleotide-DNA = a 3'-end 2'-deoxyribonucleotide-(2,3-dehydro-2,3-deoxyribose 5'-phosphate)-DNA + a 5'-end 5'-phospho-2'-deoxyribonucleoside-DNA + H(+). Functionally, involved in base excision repair of DNA damaged by oxidation or by mutagenic agents. Acts as a DNA glycosylase that recognizes and removes damaged bases. Has a preference for oxidized purines, such as 7,8-dihydro-8-oxoguanine (8-oxoG). Has AP (apurinic/apyrimidinic) lyase activity and introduces nicks in the DNA strand. Cleaves the DNA backbone by beta-delta elimination to generate a single-strand break at the site of the removed base with both 3'- and 5'-phosphates. This is Formamidopyrimidine-DNA glycosylase from Hahella chejuensis (strain KCTC 2396).